The sequence spans 306 residues: Curved DNA-binding protein (306 aa).

In terms of domain architecture, J spans 5 to 69 (DYYAIMGVKP…QRRAEYDQLW (65 aa)).

Its subcellular location is the cytoplasm. It localises to the nucleoid. DNA-binding protein that preferentially recognizes a curved DNA sequence. It is probably a functional analog of DnaJ; displays overlapping activities with DnaJ, but functions under different conditions, probably acting as a molecular chaperone in an adaptive response to environmental stresses other than heat shock. Lacks autonomous chaperone activity; binds native substrates and targets them for recognition by DnaK. Its activity is inhibited by the binding of CbpM. In Salmonella arizonae (strain ATCC BAA-731 / CDC346-86 / RSK2980), this protein is Curved DNA-binding protein.